The sequence spans 292 residues: Calponin-1 (292 aa).

Positions proline 28–alanine 131 constitute a Calponin-homology (CH) domain. 3 Calponin-like repeats span residues isoleucine 164–tyrosine 189, isoleucine 204–phenylalanine 229, and isoleucine 243–tyrosine 268. Threonine 170 carries the phosphothreonine; by ROCK2 modification. Serine 175 is subject to Phosphoserine; by PKC, CaMK2 and ROCK2. Threonine 180 and threonine 184 each carry phosphothreonine; by ROCK2. Position 184 is a phosphothreonine; by PKC and CaMK2 (threonine 184). A calmodulin-binding region spans residues arginine 185–leucine 193. At threonine 259 the chain carries Phosphothreonine; by ROCK2.

It belongs to the calponin family. Post-translationally, phosphorylation by PKC or CaM kinase II reduces the binding of calponin to F-actin and tropomyosin. Smooth muscle, and tissues containing significant amounts of smooth muscle.

Thin filament-associated protein that is implicated in the regulation and modulation of smooth muscle contraction. It is capable of binding to actin, calmodulin and tropomyosin. The interaction of calponin with actin inhibits the actomyosin Mg-ATPase activity. This Gallus gallus (Chicken) protein is Calponin-1 (CNN1).